Here is a 474-residue protein sequence, read N- to C-terminus: Glutamyl-tRNA(Gln) amidotransferase subunit A (474 aa).

Residues lysine 76 and serine 151 each act as charge relay system in the active site. The Acyl-ester intermediate role is filled by serine 175.

This sequence belongs to the amidase family. GatA subfamily. Heterotrimer of A, B and C subunits.

It catalyses the reaction L-glutamyl-tRNA(Gln) + L-glutamine + ATP + H2O = L-glutaminyl-tRNA(Gln) + L-glutamate + ADP + phosphate + H(+). Its function is as follows. Allows the formation of correctly charged Gln-tRNA(Gln) through the transamidation of misacylated Glu-tRNA(Gln) in organisms which lack glutaminyl-tRNA synthetase. The reaction takes place in the presence of glutamine and ATP through an activated gamma-phospho-Glu-tRNA(Gln). This is Glutamyl-tRNA(Gln) amidotransferase subunit A from Chlorobium limicola (strain DSM 245 / NBRC 103803 / 6330).